The sequence spans 514 residues: Ras-GEF domain-containing family member 1B-A (514 aa).

Residues 76–206 enclose the N-terminal Ras-GEF domain; that stretch reads HDNNLISGSL…MTQTLIRKLT (131 aa). The 249-residue stretch at 246–494 folds into the Ras-GEF domain; it reads DPFTLAQQLT…YLASYESEGP (249 aa).

In terms of tissue distribution, detected in oocytes, and in embryos at 4 to 120 hours post-fertilization (hpf). Detected along marginal blastomeres at early epiboly stage and throughout the margin at the onset of gastrulation. At 60% epiboly, strongest expression is found in the dorsal shield region and is restricted to the epiblast. Detected in the anterior border of the presomitic mesoderm at the end of epiboly. Detected in adaxial cells, in the somites and in the nervous system during somitogenesis. Detected in diencephalon and hindbrain and in cells surrounding the notochord, including adaxial cells and ventral mesendoderm, in 15-somite stage embryos. At 48 hpf, detected mainly in the brain.

Functionally, guanine nucleotide exchange factor (GEF) for Ras family proteins (in vitro). This chain is Ras-GEF domain-containing family member 1B-A (rasgef1ba), found in Danio rerio (Zebrafish).